Reading from the N-terminus, the 122-residue chain is Large ribosomal subunit protein uL14c (122 aa).

It belongs to the universal ribosomal protein uL14 family. Part of the 50S ribosomal subunit.

The protein resides in the plastid. The protein localises to the chloroplast. In terms of biological role, binds to 23S rRNA. This is Large ribosomal subunit protein uL14c from Lepidium virginicum (Virginia pepperweed).